The sequence spans 181 residues: Cytochrome b6-f complex iron-sulfur subunit (181 aa).

Residues 1-35 (MAQTGNFKSPARMSSLGQGAAPASSGAVTGGKPRE) form a disordered region. The next 2 membrane-spanning stretches (helical) occupy residues 53-73 (VGGV…KYII) and 114-134 (GGAL…VNWV). Residues 85–178 (LTVGKASEVP…ARIEGDSIII (94 aa)) enclose the Rieske domain. [2Fe-2S] cluster-binding residues include cysteine 124, histidine 126, cysteine 142, and histidine 145. Cysteine 129 and cysteine 144 are oxidised to a cystine.

The protein belongs to the Rieske iron-sulfur protein family. Requires [2Fe-2S] cluster as cofactor.

The protein localises to the cell inner membrane. It carries out the reaction 2 oxidized [plastocyanin] + a plastoquinol + 2 H(+)(in) = 2 reduced [plastocyanin] + a plastoquinone + 4 H(+)(out). In terms of biological role, component of the green S-bacteria bc-complex which consists of the Rieske protein and cytochrome b subunit and which appears to lack a cytochrome c1-equivalent. This complex has a comparatively low redox potential. This is Cytochrome b6-f complex iron-sulfur subunit (petC) from Chlorobaculum thiosulfatiphilum (Chlorobium limicola f.sp. thiosulfatophilum).